We begin with the raw amino-acid sequence, 391 residues long: Secreted aspartic protease 1 (391 aa).

Residues 1–18 (MFLKNIFIALAIALLVDA) form the signal peptide. A propeptide spans 19-50 (SPAKRSPGFVTLDFDVIKTPVNATGQEGKVKR) (activation peptide). N-linked (GlcNAc...) asparagine glycosylation occurs at Asn-40. Positions 64–377 (YAADITIGSN…DLDDDKISLA (314 aa)) constitute a Peptidase A1 domain. Asp-82 is a catalytic residue. Residue 82 to 84 (DTG) coordinates pepstatin A. Cysteines 97 and 109 form a disulfide. Residues Asp-241 and Asp-263 each coordinate Zn(2+). Asp-267 is a catalytic residue. Residue 267-271 (DSGTT) coordinates pepstatin A. A disulfide bond links Cys-305 and Cys-343.

This sequence belongs to the peptidase A1 family. In terms of assembly, monomer.

Its subcellular location is the secreted. It catalyses the reaction Preferential cleavage at the carboxyl of hydrophobic amino acids, but fails to cleave 15-Leu-|-Tyr-16, 16-Tyr-|-Leu-17 and 24-Phe-|-Phe-25 of insulin B chain. Activates trypsinogen, and degrades keratin.. Its activity is regulated as follows. Inhibited by pepstatin A analogs and squash aspartic peptidase inhibitor (SQAPI). Secreted aspartic peptidases (SAPs) are a group of ten acidic hydrolases considered as key virulence factors. These enzymes supply the fungus with nutrient amino acids as well as are able to degrade the selected host's proteins involved in the immune defense. Induces host inflammatory cytokine production in a proteolytic activity-independent way. Plays a role in tissue damage during superficial infection. Moreover, acts toward human hemoglobin though limited proteolysis to generate a variety of antimicrobial hemocidins, enabling to compete with the other microorganisms of the same physiological niche using the microbicidal peptides generated from the host protein. Functionally, plays a key role in defense against host by cleaving histatin-5 (Hst 5), a peptide from human saliva that carries out fungicidal activity. The cleavage rate decreases in an order of SAP2 &gt; SAP9 &gt; SAP3 &gt; SAP7 &gt; SAP4 &gt; SAP1 &gt; SAP8. The first cleavage occurs between residues 'Lys-17' and 'His-18' of Hst 5, giving DSHAKRHHGYKRKFHEK and HHSHRGY peptides. Further fragmentation by SAP1 results in AKRHHGYKRKFHEK and AKRHHGY products. The polypeptide is Secreted aspartic protease 1 (Candida albicans (Yeast)).